The chain runs to 423 residues: Growth hormone-releasing hormone receptor (423 aa).

The first 22 residues, 1–22, serve as a signal peptide directing secretion; that stretch reads MDGLMWATRILCLLSLCGVTLG. At 23-130 the chain is on the extracellular side; the sequence is HLHLECDFIT…KEKSYFSTVK (108 aa). 3 cysteine pairs are disulfide-bonded: Cys-41–Cys-64, Cys-55–Cys-96, and Cys-78–Cys-112. Residues Asn-49 and Asn-50 are each glycosylated (N-linked (GlcNAc...) asparagine). Residues 131–151 traverse the membrane as a helical segment; sequence IIYTTGHSISIVALCVAIAIL. Over 152–167 the chain is Cytoplasmic; that stretch reads VALRRLHCPRNYIHTQ. The helical transmembrane segment at 168–188 threads the bilayer; it reads LFATFILKASAVFLKDAAIFQ. Residues 189–210 lie on the Extracellular side of the membrane; it reads GDSTDHCSMSTVLCKVSVAISH. The chain crosses the membrane as a helical span at residues 211 to 231; it reads LATMTNFSWLLAEAVYLSCLL. The Cytoplasmic portion of the chain corresponds to 232-240; sequence ASTSPRSKP. The chain crosses the membrane as a helical span at residues 241–261; that stretch reads AFWWLVLAGWGLPVLCTGTWV. Residues 262-283 lie on the Extracellular side of the membrane; it reads GCKLAFEDTECWDLDNSSPCWW. Residues 284–304 traverse the membrane as a helical segment; that stretch reads IIKGPIVLSVGVNFGLFLNII. Residues 305-331 are Cytoplasmic-facing; it reads CILLRKLEPAQGGLHTRAQYWRLSKST. Residues 332–352 form a helical membrane-spanning segment; the sequence is LLLIPLFGIHYIIFNFLPDSA. Residues 353-357 lie on the Extracellular side of the membrane; the sequence is GLDIR. Residues 358–378 traverse the membrane as a helical segment; that stretch reads VPLELGLGSFQGFIVAVLYCF. Residues 379-423 are Cytoplasmic-facing; it reads LNQEVRTEISRKWYGHDPELLPARRTCTEWTTPPRSRLKVLTSEC.

This sequence belongs to the G-protein coupled receptor 2 family. Pituitary gland.

The protein resides in the cell membrane. Functionally, receptor for GRF, coupled to G proteins which activate adenylyl cyclase. Stimulates somatotroph cell growth, growth hormone gene transcription and growth hormone secretion. The chain is Growth hormone-releasing hormone receptor (Ghrhr) from Mus musculus (Mouse).